A 450-amino-acid polypeptide reads, in one-letter code: Protein DA1-related 3 (450 aa).

The stretch at methionine 1 to glutamine 46 forms a coiled coil. 2 stretches are compositionally biased toward basic and acidic residues: residues lysine 27 to valine 47 and threonine 56 to valine 69. The interval lysine 27–glycine 87 is disordered.

The chain is Protein DA1-related 3 (DAR3) from Arabidopsis thaliana (Mouse-ear cress).